The chain runs to 466 residues: Probable Xaa-Pro aminopeptidase pepP (466 aa).

Mn(2+)-binding residues include Asp264, Asp275, Glu398, and Glu438.

This sequence belongs to the peptidase M24B family. The cofactor is Mn(2+).

It catalyses the reaction Release of any N-terminal amino acid, including proline, that is linked to proline, even from a dipeptide or tripeptide.. Functionally, catalyzes the removal of a penultimate prolyl residue from the N-termini of peptides. This is Probable Xaa-Pro aminopeptidase pepP (pepP) from Aspergillus niger (strain ATCC MYA-4892 / CBS 513.88 / FGSC A1513).